The sequence spans 420 residues: GDP-mannose transporter 2 (420 aa).

Residues 1 to 11 (MASYTPSSSRP) are compositionally biased toward polar residues. The disordered stretch occupies residues 1-21 (MASYTPSSSRPHTPLGLSPRG). The Cytoplasmic portion of the chain corresponds to 1–76 (MASYTPSSSR…KAKKEEVCMP (76 aa)). Residues 77–97 (ASTTVLPILSYCVASIMMTVV) traverse the membrane as a helical segment. Over 98–106 (NKFVVSGRQ) the chain is Lumenal. Residues 107–127 (FTMTFLLLAIQSFVCVACVWL) traverse the membrane as a helical segment. The Cytoplasmic segment spans residues 128–145 (AKRIGVINFRDWDMNDAK). Residues 146–168 (AWFPVSSLLVAVIYTGSKSLQFL) form a helical membrane-spanning segment. The Lumenal portion of the chain corresponds to 169 to 171 (SIP). A helical membrane pass occupies residues 172-194 (VYTIFKNLTIILIAYGEVIWFGG). At 195 to 200 (HVTPLT) the chain is on the cytoplasmic side. A helical transmembrane segment spans residues 201-223 (LCSFFLMVGSSVIAAWADISTTL). Residues 224-251 (SKLSAGVAVVDPISGADVPLSSISVMDT) lie on the Lumenal side of the membrane. A helical membrane pass occupies residues 252-272 (MNVGYLWMFINCLASAGYVLF). Residues 273–293 (MRKRIKVTGFKDWDSMFYNNL) are Cytoplasmic-facing. A helical transmembrane segment spans residues 294–314 (LSIPVLFVFSLIIEDWGAASF). At 315–323 (SRNFPEEGR) the chain is on the lumenal side. Residues 324-344 (AFLLSAIAFSGAAAVFISYST) form a helical membrane-spanning segment. The Cytoplasmic portion of the chain corresponds to 345–355 (AWCVRICGATT). A helical membrane pass occupies residues 356–376 (YSLVGALNKLPVAASGILFFG). The Lumenal portion of the chain corresponds to 377–378 (DP). A helical transmembrane segment spans residues 379–399 (VNFGNVSAILVGGVSGIVYAV). The Cytoplasmic segment spans residues 400 to 420 (AKTNQAKVEKSKQARGGESKA).

It belongs to the TPT transporter family. SLC35D subfamily. As to quaternary structure, homooligomer.

It localises to the golgi apparatus membrane. The protein localises to the cytoplasmic vesicle membrane. It is found in the endoplasmic reticulum membrane. Involved in the import of GDP-mannose from the cytoplasm into the Golgi lumen. The chain is GDP-mannose transporter 2 (GMT2) from Cryptococcus neoformans var. neoformans serotype D (strain B-3501A) (Filobasidiella neoformans).